The following is a 404-amino-acid chain: DNA polymerase processivity factor BMRF1 (404 aa).

Residues 1 to 300 (METTQTLRFK…SVILFNHASE (300 aa)) form a homodimerization; DNA binding and DNA polymerase processivity region. Residues 301–404 (EAAASTASEP…KVKQAFNPLI (104 aa)) are transcriptional activation. The segment at 302–404 (AAASTASEPE…KVKQAFNPLI (103 aa)) is disordered. Over residues 335–344 (SPSPPPPPRT) the composition is skewed to pro residues. Serine 337 bears the Phosphoserine mark. Threonine 344 is subject to Phosphothreonine. Serine 349 carries the phosphoserine modification. Threonine 355 carries the post-translational modification Phosphothreonine.

Belongs to the herpesviridae DNA polymerase accessory subunit family. Homodimer. Two dimers can adopt a tetrameric ring-like structure. Forms a complex with the DNA-binding protein BALF2, the DNA polymerase subunit BALF5, and the alkaline exonuclease BGLF5. Interacts (via N-terminus) with BZLF1 (via bZIP domain); this interaction may inhibit BZLF1-induced transcription of the BMRF1 promoter. Interacts (via C-terminus) with host NuRD complex; this interaction is important for transcriptional activation of EBV promoters and inhibition of the ubiquitination step of DDR signaling. Phosphorylated by the viral BGLF4 kinase.

Its subcellular location is the virion tegument. It is found in the host nucleus. Functionally, acts as a DNA polymerase processivity factor; a transcriptional activator for several EBV promoters and inhibits the host DNA damage response (DDR) to double-stranded DNA breaks. Plays an essential role in the viral lytic DNA replication by acting as a polymerase accessory subunit. Stimulates the viral DNA polymerase activity and appears to function with it as a holoenzyme. Increases the processivity of the viral polymerase, probably by acting as a sliding clamp that prevents dissociation of the polymerase from the active template. In addition, BMRF1 transcriptionally activates the oriLyt early BHLF1 promoter. Promotes G1/S cell cycle arrest through p53 induction. This is DNA polymerase processivity factor BMRF1 from Epstein-Barr virus (strain AG876) (HHV-4).